Consider the following 374-residue polypeptide: Outer membrane protein assembly factor BamC (374 aa).

Positions 1–22 (MSKFYKSGRVTTAVIVALSLSA) are cleaved as a signal peptide. C23 carries N-palmitoyl cysteine lipidation. The S-diacylglycerol cysteine moiety is linked to residue C23.

The protein belongs to the BamC family. Part of the Bam complex.

Its subcellular location is the cell outer membrane. Functionally, part of the outer membrane protein assembly complex, which is involved in assembly and insertion of beta-barrel proteins into the outer membrane. The sequence is that of Outer membrane protein assembly factor BamC from Psychromonas ingrahamii (strain DSM 17664 / CCUG 51855 / 37).